We begin with the raw amino-acid sequence, 258 residues long: Glucosamine-6-phosphate deaminase (258 aa).

Asp-65 (proton acceptor; for enolization step) is an active-site residue. Asp-134 (for ring-opening step) is an active-site residue. The active-site Proton acceptor; for ring-opening step is His-136. The active-site For ring-opening step is the Glu-141.

It belongs to the glucosamine/galactosamine-6-phosphate isomerase family. NagB subfamily.

The enzyme catalyses alpha-D-glucosamine 6-phosphate + H2O = beta-D-fructose 6-phosphate + NH4(+). It participates in amino-sugar metabolism; N-acetylneuraminate degradation; D-fructose 6-phosphate from N-acetylneuraminate: step 5/5. In terms of biological role, catalyzes the reversible isomerization-deamination of glucosamine 6-phosphate (GlcN6P) to form fructose 6-phosphate (Fru6P) and ammonium ion. The sequence is that of Glucosamine-6-phosphate deaminase from Corynebacterium kroppenstedtii (strain DSM 44385 / JCM 11950 / CIP 105744 / CCUG 35717).